The chain runs to 343 residues: Histone H1.8 (343 aa).

The segment covering 1–32 (MAPGSIASSDTSSSTSSSSTSSASSASAEGSS) has biased composition (low complexity). 2 disordered regions span residues 1–50 (MAPG…VRAP) and 122–343 (ATGS…EAEG). One can recognise an H15 domain in the interval 52–130 (RHPPVLRMVL…GATGSFKLVP (79 aa)). Positions 132 to 142 (DKRKIPPRKTA) are enriched in basic residues. Basic and acidic residues-rich tracts occupy residues 150 to 183 (EGKD…ERAA), 199 to 219 (QTKD…RPDK), and 235 to 247 (KVKE…ADTK). The Nuclear localization signal motif lies at 161–176 (KKDPANTVEVKKGSRK). Positions 253 to 265 (QPGSQSSKSTVTK) are enriched in polar residues.

The protein belongs to the histone H1/H5 family. As to expression, oocyte (at protein level).

Its subcellular location is the cytoplasm. It localises to the nucleus. The protein localises to the chromosome. Functionally, may play a key role in the control of gene expression during oogenesis and early embryogenesis, presumably through the perturbation of chromatin structure. Essential for meiotic maturation of germinal vesicle-stage oocytes. The somatic type linker histone H1c is rapidly replaced by H1oo in a donor nucleus transplanted into an oocyte. The greater mobility of H1oo as compared to H1c may contribute to this rapid replacement and increased instability of the embryonic chromatin structure. The rapid replacement of H1c with H1oo may play an important role in nuclear remodeling. The protein is Histone H1.8 of Bos taurus (Bovine).